The primary structure comprises 379 residues: NADH-rubredoxin oxidoreductase (379 aa).

2 disulfide bridges follow: C26-C286 and C137-C216. FAD contacts are provided by residues 33 to 35, R42, A79, and Y125; that span reads NSE. D259 provides a ligand contact to FAD.

The protein belongs to the FAD-dependent oxidoreductase family. In terms of assembly, monomer. Requires FAD as cofactor.

The enzyme catalyses 2 reduced [rubredoxin] + NAD(+) + H(+) = 2 oxidized [rubredoxin] + NADH. Functionally, catalyzes the NADH-dependent reduction of rubredoxin (Rd). NADPH is a very poor electron donor compared to NADH. Functions as an intermediate component in the electron transfer chain: NADH-&gt;NROR-&gt;Rd-&gt;FprA1/2. Also functions as an intermediate component in the electron transfer chains from NADH to revRbr and Dfx. Therefore, is a key electron carrier in an efficient multienzyme complex that can scavenge O(2) and reactive oxygen species (ROS), and thus plays an important role in the oxidative stress defense system in C.acetobutylicum, an obligate anaerobic bacterium. The sequence is that of NADH-rubredoxin oxidoreductase (nroR) from Clostridium acetobutylicum (strain ATCC 824 / DSM 792 / JCM 1419 / IAM 19013 / LMG 5710 / NBRC 13948 / NRRL B-527 / VKM B-1787 / 2291 / W).